The chain runs to 461 residues: Cysteine--tRNA ligase (461 aa).

Residue C28 participates in Zn(2+) binding. The 'HIGH' region signature appears at 30–40 (ITVYDLCHIGH). Zn(2+)-binding residues include C209, H234, and E238. The short motif at 266 to 270 (KMSKS) is the 'KMSKS' region element. K269 lines the ATP pocket.

This sequence belongs to the class-I aminoacyl-tRNA synthetase family. In terms of assembly, monomer. It depends on Zn(2+) as a cofactor.

It localises to the cytoplasm. The catalysed reaction is tRNA(Cys) + L-cysteine + ATP = L-cysteinyl-tRNA(Cys) + AMP + diphosphate. The chain is Cysteine--tRNA ligase from Escherichia coli O157:H7.